We begin with the raw amino-acid sequence, 250 residues long: Phosphonates import ATP-binding protein PhnC (250 aa).

The region spanning 2-247 is the ABC transporter domain; the sequence is ILFNNVNKVW…KLDAQAMKKI (246 aa). 35–42 contributes to the ATP binding site; the sequence is GLSGAGKT.

Belongs to the ABC transporter superfamily. Phosphonates importer (TC 3.A.1.9.1) family. As to quaternary structure, the complex is composed of two ATP-binding proteins (PhnC), two transmembrane proteins (PhnE) and a solute-binding protein (PhnD).

The protein localises to the cell membrane. The enzyme catalyses phosphonate(out) + ATP + H2O = phosphonate(in) + ADP + phosphate + H(+). Functionally, part of the ABC transporter complex PhnCDE involved in phosphonates import. Responsible for energy coupling to the transport system. The polypeptide is Phosphonates import ATP-binding protein PhnC (Mycoplasma capricolum subsp. capricolum (strain California kid / ATCC 27343 / NCTC 10154)).